The following is a 168-amino-acid chain: Photosystem I assembly protein Ycf3 (168 aa).

TPR repeat units lie at residues alanine 35–proline 68, serine 72–leucine 105, and glycine 120–asparagine 153.

The protein belongs to the Ycf3 family.

It is found in the plastid. The protein resides in the chloroplast thylakoid membrane. Essential for the assembly of the photosystem I (PSI) complex. May act as a chaperone-like factor to guide the assembly of the PSI subunits. In Nicotiana sylvestris (Wood tobacco), this protein is Photosystem I assembly protein Ycf3.